The sequence spans 355 residues: CRAL-TRIO domain-containing protein C365.01 (355 aa).

Residues 93–260 (ENGLNQNFVK…SMHGQFDETK (168 aa)) enclose the CRAL-TRIO domain.

This is CRAL-TRIO domain-containing protein C365.01 from Schizosaccharomyces pombe (strain 972 / ATCC 24843) (Fission yeast).